We begin with the raw amino-acid sequence, 37 residues long: Large ribosomal subunit protein bL36 (37 aa).

This sequence belongs to the bacterial ribosomal protein bL36 family.

This is Large ribosomal subunit protein bL36 from Tropheryma whipplei (strain Twist) (Whipple's bacillus).